Consider the following 238-residue polypeptide: uncharacterized protein (238 aa).

Residues Met1–Lys68 form the HTH gntR-type domain. Positions Glu28–Asp47 form a DNA-binding region, H-T-H motif.

This is an uncharacterized protein from Escherichia coli (strain K12).